Reading from the N-terminus, the 405-residue chain is Tetracycline resistance protein, class E (405 aa).

Transmembrane regions (helical) follow at residues 6-27, 42-62, 74-94, 102-122, 131-151, 159-179, 215-235, 245-265, 278-298, 299-319, 337-357, and 364-385; these read MMALVIIFLDAMGIGIIMPVLP, NYGVLLALYAMMQVIFAPLLG, LLLSLLGATLDYALMATASVV, LIAGITGATGAVAASTIADVT, FGMMGACFGGGMIAGPVIGGF, APFMFAAAINGLAFLVSLFIL, LVVFFIIQLIGQIPATLWVLF, VMVGVSLAVFGLTHALFQGLA, AIAVGILADGCGLFLLAVITQ, SWMVWPVLLLLACGGITLPAL, GVLTSLTHLTAVIGPLVFAFL, and TWNGWVWIIGCGLYVVALIILR.

This sequence belongs to the major facilitator superfamily. TCR/Tet family.

Its subcellular location is the cell inner membrane. Its function is as follows. Resistance to tetracycline by an active tetracycline efflux. This is an energy-dependent process that decreases the accumulation of the antibiotic in whole cells. This protein functions as a metal-tetracycline/H(+) antiporter. The chain is Tetracycline resistance protein, class E (tetA) from Escherichia coli.